Consider the following 467-residue polypeptide: ATP synthase subunit beta (467 aa).

150 to 157 is an ATP binding site; it reads GGAGVGKT.

This sequence belongs to the ATPase alpha/beta chains family. F-type ATPases have 2 components, CF(1) - the catalytic core - and CF(0) - the membrane proton channel. CF(1) has five subunits: alpha(3), beta(3), gamma(1), delta(1), epsilon(1). CF(0) has three main subunits: a(1), b(2) and c(9-12). The alpha and beta chains form an alternating ring which encloses part of the gamma chain. CF(1) is attached to CF(0) by a central stalk formed by the gamma and epsilon chains, while a peripheral stalk is formed by the delta and b chains.

Its subcellular location is the cell inner membrane. It carries out the reaction ATP + H2O + 4 H(+)(in) = ADP + phosphate + 5 H(+)(out). Functionally, produces ATP from ADP in the presence of a proton gradient across the membrane. The catalytic sites are hosted primarily by the beta subunits. This chain is ATP synthase subunit beta, found in Vibrio vulnificus (strain YJ016).